We begin with the raw amino-acid sequence, 163 residues long: RRM-domain-containing protein ECU01_0840 (163 aa).

An RRM domain is found at 84 to 163 (CSVKLSNLPL…SLGLSAEIAR (80 aa)).

This is RRM-domain-containing protein ECU01_0840 from Encephalitozoon cuniculi (strain GB-M1) (Microsporidian parasite).